Here is a 530-residue protein sequence, read N- to C-terminus: Type 2 DNA topoisomerase 6 subunit B (530 aa).

Residues N42, D76, 97–98, 106–113, and K427 contribute to the ATP site; these read SK and GMYGLGVK.

This sequence belongs to the TOP6B family. As to quaternary structure, homodimer. Heterotetramer of two Top6A and two Top6B chains.

It carries out the reaction ATP-dependent breakage, passage and rejoining of double-stranded DNA.. Functionally, relaxes both positive and negative superturns and exhibits a strong decatenase activity. The protein is Type 2 DNA topoisomerase 6 subunit B of Saccharolobus islandicus (strain M.16.4 / Kamchatka #3) (Sulfolobus islandicus).